A 137-amino-acid chain; its full sequence is Large ribosomal subunit protein uL16 (137 aa).

Belongs to the universal ribosomal protein uL16 family. As to quaternary structure, part of the 50S ribosomal subunit.

In terms of biological role, binds 23S rRNA and is also seen to make contacts with the A and possibly P site tRNAs. The polypeptide is Large ribosomal subunit protein uL16 (Pseudomonas aeruginosa (strain LESB58)).